Here is a 481-residue protein sequence, read N- to C-terminus: UDP-N-acetylmuramate--L-alanine ligase (481 aa).

Residue 135 to 141 (GTHGKTT) coordinates ATP.

This sequence belongs to the MurCDEF family.

Its subcellular location is the cytoplasm. The enzyme catalyses UDP-N-acetyl-alpha-D-muramate + L-alanine + ATP = UDP-N-acetyl-alpha-D-muramoyl-L-alanine + ADP + phosphate + H(+). Its pathway is cell wall biogenesis; peptidoglycan biosynthesis. Its function is as follows. Cell wall formation. The protein is UDP-N-acetylmuramate--L-alanine ligase of Nostoc punctiforme (strain ATCC 29133 / PCC 73102).